Consider the following 336-residue polypeptide: UDP-3-O-acylglucosamine N-acyltransferase (336 aa).

The active-site Proton acceptor is the histidine 233.

The protein belongs to the transferase hexapeptide repeat family. LpxD subfamily. As to quaternary structure, homotrimer.

It carries out the reaction a UDP-3-O-[(3R)-3-hydroxyacyl]-alpha-D-glucosamine + a (3R)-hydroxyacyl-[ACP] = a UDP-2-N,3-O-bis[(3R)-3-hydroxyacyl]-alpha-D-glucosamine + holo-[ACP] + H(+). It participates in bacterial outer membrane biogenesis; LPS lipid A biosynthesis. Its function is as follows. Catalyzes the N-acylation of UDP-3-O-acylglucosamine using 3-hydroxyacyl-ACP as the acyl donor. Is involved in the biosynthesis of lipid A, a phosphorylated glycolipid that anchors the lipopolysaccharide to the outer membrane of the cell. This is UDP-3-O-acylglucosamine N-acyltransferase from Helicobacter pylori (strain ATCC 700392 / 26695) (Campylobacter pylori).